A 206-amino-acid chain; its full sequence is Uridine kinase (206 aa).

Gly9 to Thr16 contributes to the ATP binding site.

Belongs to the uridine kinase family.

It is found in the cytoplasm. It catalyses the reaction uridine + ATP = UMP + ADP + H(+). It carries out the reaction cytidine + ATP = CMP + ADP + H(+). The protein operates within pyrimidine metabolism; CTP biosynthesis via salvage pathway; CTP from cytidine: step 1/3. It participates in pyrimidine metabolism; UMP biosynthesis via salvage pathway; UMP from uridine: step 1/1. The sequence is that of Uridine kinase from Borrelia hermsii (strain HS1 / DAH).